Consider the following 439-residue polypeptide: Type 3 secretion system ATPase (439 aa).

Residue 172–177 (GGGKST) participates in ATP binding.

Belongs to the ATPase alpha/beta chains family. T3SS ATPase subfamily. The core secretion machinery of the T3SS is composed of approximately 20 different proteins, including cytoplasmic components, a base, an export apparatus and a needle. This subunit is part of the cytosolic complex. Forms homohexamers.

The protein localises to the cytoplasm. The catalysed reaction is ATP + H2O + cellular proteinSide 1 = ADP + phosphate + cellular proteinSide 2.. Functionally, ATPase component of the type III secretion system (T3SS), also called injectisome, which is used to inject bacterial effector proteins into eukaryotic host cells. Acts as a molecular motor to provide the energy that is required for the export of proteins. Required for type III secretion apparatus (T3SA) formation, proper protein secretion, host cell invasion and virulence. May play a critical role in T3SS substrate recognition, disassembly of the effector/chaperone complex and unfolding of the effector in an ATP-dependent manner prior to secretion. This chain is Type 3 secretion system ATPase, found in Yersinia pseudotuberculosis serotype I (strain IP32953).